Consider the following 839-residue polypeptide: AMP deaminase (839 aa).

Residues 8 to 28 traverse the membrane as a helical segment; sequence LALAALFGASFVAVSGFFMHF. The disordered stretch occupies residues 40 to 167; it reads ERKENPDGDE…DDDDNLTNSE (128 aa). A compositionally biased stretch (gly residues) spans 85–94; the sequence is DGGGGGGGDT. Phosphoserine occurs at positions 134 and 140. Residues 153–162 are compositionally biased toward acidic residues; that stretch reads SVEESDDDDN. Serine 203 is subject to Phosphoserine. Residue 289 to 296 coordinates ATP; sequence AHYPQGKS. Histidine 391 and histidine 393 together coordinate Zn(2+). Substrate contacts are provided by residues histidine 393 and 462–467; that span reads KFNLKY. Histidine 659 serves as a coordination point for Zn(2+). Glutamate 662 serves as a coordination point for substrate. Residue histidine 681 is the Proton acceptor of the active site. Position 736 (aspartate 736) interacts with Zn(2+). 737–740 contacts substrate; sequence DPLQ.

It belongs to the metallo-dependent hydrolases superfamily. Adenosine and AMP deaminases family. As to quaternary structure, homodimer. Interacts with AHK4. Interacts with EER5. The cofactor is Zn(2+). In terms of tissue distribution, expressed in seedlings, roots, leaves, flowers, pollen grains, pollen tubes and siliques, and at a lower level in stems.

Its subcellular location is the membrane. It is found in the microsome membrane. The catalysed reaction is AMP + H2O + H(+) = IMP + NH4(+). The protein operates within purine metabolism; IMP biosynthesis via salvage pathway; IMP from AMP: step 1/1. Its activity is regulated as follows. Activated by ATP. Activated by sulfate ions (in vitro). Inhibited by phosphate ions. Its function is as follows. AMP deaminase plays a critical role in energy metabolism. Essential for the transition from zygote to embryo. The protein is AMP deaminase of Arabidopsis thaliana (Mouse-ear cress).